Reading from the N-terminus, the 77-residue chain is uncharacterized protein (77 aa).

Residues 36–52 form a helical membrane-spanning segment; the sequence is FYQLILKVLSALLLLSV.

The protein localises to the membrane. This is an uncharacterized protein from Saccharomyces cerevisiae (strain ATCC 204508 / S288c) (Baker's yeast).